Here is a 478-residue protein sequence, read N- to C-terminus: Glycogen synthase (478 aa).

Lys-15 is an ADP-alpha-D-glucose binding site.

Belongs to the glycosyltransferase 1 family. Bacterial/plant glycogen synthase subfamily.

The catalysed reaction is [(1-&gt;4)-alpha-D-glucosyl](n) + ADP-alpha-D-glucose = [(1-&gt;4)-alpha-D-glucosyl](n+1) + ADP + H(+). Its pathway is glycan biosynthesis; glycogen biosynthesis. Its function is as follows. Synthesizes alpha-1,4-glucan chains using ADP-glucose. This chain is Glycogen synthase, found in Caldicellulosiruptor bescii (strain ATCC BAA-1888 / DSM 6725 / KCTC 15123 / Z-1320) (Anaerocellum thermophilum).